Reading from the N-terminus, the 104-residue chain is uncharacterized protein (104 aa).

A coiled-coil region spans residues 24–69 (VIKQIIEKYNDKVKELDTLKNQYQNLQQDYENLKQQVSLQRQTMIS).

This is an uncharacterized protein from Acanthamoeba polyphaga mimivirus (APMV).